The chain runs to 858 residues: Neural cell adhesion molecule 1 (858 aa).

Residues 1–19 (MLQTKDLIWTLFFLGTAVS) form the signal peptide. Ig-like C2-type domains lie at 20–111 (LQVD…ATVN), 116–205 (QKLM…KDIQ), 212–301 (PTIQ…ATIH), 308–413 (PKIT…LEVQ), and 416–501 (PKLQ…ESLE). Topologically, residues 20 to 718 (LQVDIVPSQG…IPANGSPTSG (699 aa)) are extracellular. 2 disulfides stabilise this stretch: Cys-41–Cys-96 and Cys-139–Cys-189. A glycan (N-linked (GlcNAc...) asparagine) is linked at Asn-222. A disulfide bridge links Cys-235 with Cys-287. N-linked (GlcNAc...) asparagine glycosylation is found at Asn-315, Asn-347, Asn-433, Asn-459, and Asn-488. Cys-329 and Cys-395 form a disulfide bridge. Cys-436 and Cys-489 form a disulfide bridge. Fibronectin type-III domains lie at 509–608 (TPSS…TQPV) and 611–706 (EPSA…SAQP). A lipid anchor (GPI-anchor amidated asparagine) is attached at Pro-706. The chain crosses the membrane as a helical span at residues 719–739 (LSTGAIVGILIVIFVLLLVVV). Topologically, residues 740 to 858 (DITCYFLNKC…TQTKENESKA (119 aa)) are cytoplasmic. Residue Ile-741 is the site of GPI-anchor amidated asparagine attachment. Residues 766–858 (GAKGKDMEEG…TQTKENESKA (93 aa)) form a disordered region. Composition is skewed to basic and acidic residues over residues 768–809 (KGKD…HTEP) and 817–834 (EPEK…ETET). Phosphoserine occurs at positions 780 and 784.

(Microbial infection) Interacts with rabies virus glycoprotein. As to quaternary structure, (Microbial infection) Interacts with Zika virus envelope protein E. In terms of assembly, interacts with MDK. Found in a complex with SLC39A6, SLC39A10 and with NCAM1; this complex controls NCAM1 phosphorylation and integration into focal adhesion complexes during epithelial-tomesenchymal transition. Interacts with synaptic plasticity regulator PANTS. Post-translationally, polysialylated at Asn-459 and Asn-488 by ST8SIA2 and ST8SIA4. Polysialylation modulates cell interactions by confering both attractive and repulsive properties that are highly regulated by ST8SIA2 and ST8SIA4. Polysialylation is formed on a-2,3-linked sialic acid of core glycans.

It is found in the cell membrane. The protein localises to the secreted. This protein is a cell adhesion molecule involved in neuron-neuron adhesion, neurite fasciculation, outgrowth of neurites, etc. In terms of biological role, (Microbial infection) Acts as a receptor for rabies virus. Its function is as follows. (Microbial infection) Acts as a receptor for Zika virus. The sequence is that of Neural cell adhesion molecule 1 from Homo sapiens (Human).